A 197-amino-acid chain; its full sequence is Large ribosomal subunit protein uL10 (197 aa).

Residues 163–197 (GAPAAAEAPAAEESADSAAEAAAEAPAEAPAAEEN) are disordered.

It belongs to the universal ribosomal protein uL10 family. In terms of assembly, part of the ribosomal stalk of the 50S ribosomal subunit. The N-terminus interacts with L11 and the large rRNA to form the base of the stalk. The C-terminus forms an elongated spine to which L12 dimers bind in a sequential fashion forming a multimeric L10(L12)X complex.

Functionally, forms part of the ribosomal stalk, playing a central role in the interaction of the ribosome with GTP-bound translation factors. The protein is Large ribosomal subunit protein uL10 of Pseudarthrobacter chlorophenolicus (strain ATCC 700700 / DSM 12829 / CIP 107037 / JCM 12360 / KCTC 9906 / NCIMB 13794 / A6) (Arthrobacter chlorophenolicus).